A 275-amino-acid polypeptide reads, in one-letter code: 3-methyl-2-oxobutanoate hydroxymethyltransferase (275 aa).

The Mg(2+) site is built by Asp-44 and Asp-83. 3-methyl-2-oxobutanoate contacts are provided by residues 44 to 45, Asp-83, and Lys-113; that span reads DS. Residue Glu-115 participates in Mg(2+) binding. Glu-182 (proton acceptor) is an active-site residue.

This sequence belongs to the PanB family. Homodecamer; pentamer of dimers. Mg(2+) is required as a cofactor.

It localises to the cytoplasm. It catalyses the reaction 3-methyl-2-oxobutanoate + (6R)-5,10-methylene-5,6,7,8-tetrahydrofolate + H2O = 2-dehydropantoate + (6S)-5,6,7,8-tetrahydrofolate. It participates in cofactor biosynthesis; (R)-pantothenate biosynthesis; (R)-pantoate from 3-methyl-2-oxobutanoate: step 1/2. Catalyzes the reversible reaction in which hydroxymethyl group from 5,10-methylenetetrahydrofolate is transferred onto alpha-ketoisovalerate to form ketopantoate. This Clostridium botulinum (strain Alaska E43 / Type E3) protein is 3-methyl-2-oxobutanoate hydroxymethyltransferase.